The following is a 360-amino-acid chain: Deoxyhypusine hydroxylase (360 aa).

3 HEAT-like PBS-type repeats span residues 56-82 (LKHELAYVLGQLEDARALPTLKKILQD), 89-115 (VRHEAAEAMGAISDPSVLPILEQYRSD), and 213-245 (ERYRAMFALRNVAHGGGDGAIQAVLALARGLQD). Fe cation contacts are provided by H58, E59, H91, and E92. H252, E253, H285, and E286 together coordinate Fe cation.

This sequence belongs to the deoxyhypusine hydroxylase family. The cofactor is Fe(2+).

It localises to the cytoplasm. Its subcellular location is the nucleus. The enzyme catalyses [eIF5A protein]-deoxyhypusine + AH2 + O2 = [eIF5A protein]-hypusine + A + H2O. It functions in the pathway protein modification; eIF5A hypusination. Catalyzes the hydroxylation of the N(6)-(4-aminobutyl)-L-lysine intermediate to form hypusine, an essential post-translational modification only found in mature eIF-5A factor. This Mycosarcoma maydis (Corn smut fungus) protein is Deoxyhypusine hydroxylase.